A 109-amino-acid chain; its full sequence is Parvalbumin, muscle (109 aa).

An N-acetylalanine modification is found at Ala1. EF-hand domains are found at residues 38–73 (KSPEDVKKVFHILDKDRSGFIEEEELKFVLKGFTPD) and 77–109 (LSDKETKALLAAGDKDGDGKIGADEFATMVAES). Residues Asp51, Asp53, Ser55, Glu62, Asp90, Asp92, Asp94, Lys96, and Glu101 each coordinate Ca(2+).

This sequence belongs to the parvalbumin family.

Functionally, in muscle, parvalbumin is thought to be involved in relaxation after contraction. It binds two calcium ions. In Gallus gallus (Chicken), this protein is Parvalbumin, muscle.